A 470-amino-acid polypeptide reads, in one-letter code: Pancreatic lipase-related protein 2 (470 aa).

A signal peptide spans 1-18 (MMLFVWTTGLLLLATARG). Cys-22 and Cys-28 form a disulfide bridge. The required for galactolipase activity stretch occupies residues 94–106 (IHGFIDNGEKDWL). A disulfide bridge connects residues Cys-110 and Cys-121. The active-site Nucleophile is Ser-172. Asp-196 (charge relay system) is an active-site residue. Residues Glu-207, Arg-210, Asp-212, and Asp-215 each contribute to the Ca(2+) site. Residues Cys-257 and Cys-281 are joined by a disulfide bond. The segment at 258–280 (EKNIISTIVDVNGFLEGITSLAA) is required for galactolipase activity. His-283 functions as the Charge relay system in the catalytic mechanism. Intrachain disulfides connect Cys-305–Cys-316 and Cys-319–Cys-324. N-linked (GlcNAc...) asparagine glycans are attached at residues Asn-354 and Asn-429. The region spanning 358-470 (WRYKVSVTLS…EDVLQSLSPC (113 aa)) is the PLAT domain. A disulfide bridge connects residues Cys-454 and Cys-470.

The protein belongs to the AB hydrolase superfamily. Lipase family. Pancreas.

Its subcellular location is the secreted. It is found in the zymogen granule membrane. The protein localises to the cell projection. The protein resides in the neuron projection. It carries out the reaction a triacylglycerol + H2O = a diacylglycerol + a fatty acid + H(+). The enzyme catalyses a 1,2-diacyl-3-O-(beta-D-galactosyl)-sn-glycerol + 2 H2O = 3-beta-D-galactosyl-sn-glycerol + 2 a fatty acid + 2 H(+). The catalysed reaction is 1,2,3-tri-(9Z-octadecenoyl)-glycerol + H2O = di-(9Z)-octadecenoylglycerol + (9Z)-octadecenoate + H(+). It catalyses the reaction di-(9Z)-octadecenoylglycerol + H2O = (9Z-octadecenoyl)-glycerol + (9Z)-octadecenoate + H(+). It carries out the reaction (9Z-octadecenoyl)-glycerol + H2O = glycerol + (9Z)-octadecenoate + H(+). The enzyme catalyses 1-(9Z-octadecenoyl)-glycerol + H2O = glycerol + (9Z)-octadecenoate + H(+). The catalysed reaction is 1,2,3-tripropanoylglycerol + H2O = dipropanoylglycerol + propanoate + H(+). It catalyses the reaction 1,2,3-tributanoylglycerol + H2O = dibutanoylglycerol + butanoate + H(+). It carries out the reaction 1,2,3-trioctanoylglycerol + H2O = dioctanoylglycerol + octanoate + H(+). The enzyme catalyses 1,2-didecanoylglycerol + H2O = decanoylglycerol + decanoate + H(+). The catalysed reaction is long chain 1,2-diacyl-3-O-beta-D-galactosyl-sn-glycerol + H2O = long chain acyl-3-O-beta-D-galactosyl-sn-glycerol + a fatty acid + H(+). It catalyses the reaction 1,2-dioctanoyl-3-O-beta-D-galactosyl-sn-glycerol + H2O = octanoyl-3-(beta-D-galactosyl)-sn-glycerol + octanoate + H(+). It carries out the reaction 1,2-didodecanoyl-3-beta-D-galactosyl-sn-glycerol + H2O = dodecanoyl-3-beta-D-galactosyl-sn-glycerol + dodecanoate + H(+). The enzyme catalyses 1-beta-D-galactosyl-2,3-didodecanoyl-sn-glycerol + H2O = 1-beta-D-galactosyl-dodecanoyl-sn-glycerol + dodecanoate + H(+). The catalysed reaction is a 1,2-diacyl-3-O-[alpha-D-galactosyl-(1-&gt;6)-beta-D-galactosyl]-sn-glycerol + H2O = acyl-3-O-[alpha-D-galactosyl-(1-&gt;6)-beta-D-galactosyl]-sn-glycerol + a fatty acid + H(+). It catalyses the reaction long chain 1,2-diacyl-3-O-[alpha-D-galactosyl-(1-&gt;6)-beta-D-galactosyl]-sn-glycerol + H2O = long chain acyl-3-O-[alpha-D-galactosyl-(1-&gt;6)-beta-D-galactosyl]-sn-glycerol + a fatty acid + H(+). It carries out the reaction 1,2-dioctanoyl-3-O-[alpha-D-galactosyl-(1-&gt;6)-beta-D-galactosyl]-sn-glycerol + H2O = octanoyl-3-O-[alpha-D-galactosyl-(1-&gt;6)-beta-D-galactosyl]-sn-glycerol + octanoate + H(+). The enzyme catalyses 1,2-didodecanoyl-3-O-[alpha-D-galactosyl-(1-&gt;6)-beta-D-galactosyl]-sn-glycerol + H2O = dodecanoyl-3-O-[alpha-D-galactosyl-(1-&gt;6)-beta-D-galactosyl]-sn-glycerol + dodecanoate + H(+). The catalysed reaction is a 1,2-diacyl-sn-glycero-3-phosphocholine + H2O = a monoacyl-sn-glycero-3-phosphocholine + a fatty acid + H(+). It participates in glycerolipid metabolism; triacylglycerol degradation. It functions in the pathway glycolipid metabolism. With respect to regulation, triacylglycerol lipase activity is inhibited by increasing bile salts concentrations and not reactivated by CLPS. In terms of biological role, lipase that primarily hydrolyzes triglycerides and galactosylglycerides. In neonates, may play a major role in pancreatic digestion of dietary fats such as milk fat globules enriched in long-chain triglycerides. Hydrolyzes short-, medium- and long-chain fatty acyls in triglycerides without apparent positional specificity. Can completely deacylate triacylglycerols. When the liver matures and bile salt synthesis increases, likely functions mainly as a galactolipase and monoacylglycerol lipase. Hydrolyzes monogalactosyldiglycerols (MGDG) and digalactosyldiacylglycerols (DGDG) present in a plant-based diet, releasing long-chain polyunsaturated fatty acids. Hydrolyzes medium- and long-chain fatty acyls in galactolipids. May act together with LIPF to hydrolyze partially digested triglycerides. Hydrolyzes long-chain monoglycerides with high efficiency. In cytotoxic T cells, contributes to perforin-dependent cell lysis, but is unlikely to mediate direct cytotoxicity. Also has low phospholipase activity. In neurons, required for the localization of the phospholipid 1-oleoyl-2-palmitoyl-PC (OPPC) to neurite tips through acyl chain remodeling of membrane phospholipids. The resulting OPPC-rich lipid membrane domain recruits the t-SNARE protein STX4 by selectively interacting with the STX4 transmembrane domain and this promotes surface expression of the dopamine transporter SLC6A3/DAT at neurite tips by facilitating fusion of SLC6A3-containing transport vesicles with the plasma membrane. The chain is Pancreatic lipase-related protein 2 from Myocastor coypus (Coypu).